A 67-amino-acid polypeptide reads, in one-letter code: Phycobilisome 7.8 kDa linker polypeptide, allophycocyanin-associated, core (67 aa).

The region spanning 1-56 is the CpcD-like domain; sequence MRVFKVTACVPSQTRIRTQRELQNTYFTKLVPYDNWFREQQRIMKMGGKIVKVELA.

Belongs to the phycobilisome linker protein family.

The protein localises to the cellular thylakoid membrane. Rod linker protein, associated with allophycocyanin. Linker polypeptides determine the state of aggregation and the location of the disk-shaped phycobiliprotein units within the phycobilisome and modulate their spectroscopic properties in order to mediate a directed and optimal energy transfer. The protein is Phycobilisome 7.8 kDa linker polypeptide, allophycocyanin-associated, core (apcC) of Arthrospira platensis (Spirulina platensis).